The sequence spans 347 residues: NHL repeat-containing protein 3 (347 aa).

Residues 1-22 (MARAWVCLAGAAFFLSCLVLHS) form the signal peptide. The stretch at 47–93 (RLDLGWPKNSEYFTGATFCVAVDSLNGLVYVAQRGDNIPKVLVFSED) is one NHL 1 repeat. A glycan (N-linked (GlcNAc...) asparagine) is linked at Asn-101. NHL repeat units lie at residues 150–196 (TPGK…LSQD) and 200–243 (LWLR…FDKD). N-linked (GlcNAc...) asparagine glycans are attached at residues Asn-206 and Asn-278. Residues 294–338 (GDCSVVSTIQLADQVLPHLLEVDRKTGAVYVAEIGAKQIQKYIPW) form an NHL 4 repeat.

This Mus musculus (Mouse) protein is NHL repeat-containing protein 3 (Nhlrc3).